Reading from the N-terminus, the 275-residue chain is Large ribosomal subunit protein uL2c (275 aa).

The disordered stretch occupies residues 219-267; it reads TVRGSVMNPCDHPHGGGEGRTPIGRTRPLTPWGKPALGKKTRKTKKLSS. Residues 255–264 show a composition bias toward basic residues; that stretch reads LGKKTRKTKK.

This sequence belongs to the universal ribosomal protein uL2 family. Part of the 50S ribosomal subunit.

It is found in the plastid. It localises to the chloroplast. This Thalassiosira pseudonana (Marine diatom) protein is Large ribosomal subunit protein uL2c (rpl2).